Consider the following 345-residue polypeptide: Mannonate dehydratase 2 (345 aa).

Belongs to the mannonate dehydratase family. Fe(2+) serves as cofactor. Mn(2+) is required as a cofactor.

It carries out the reaction D-mannonate = 2-dehydro-3-deoxy-D-gluconate + H2O. Its pathway is carbohydrate metabolism; pentose and glucuronate interconversion. In terms of biological role, catalyzes the dehydration of D-mannonate. In Halalkalibacterium halodurans (strain ATCC BAA-125 / DSM 18197 / FERM 7344 / JCM 9153 / C-125) (Bacillus halodurans), this protein is Mannonate dehydratase 2 (uxuA2).